We begin with the raw amino-acid sequence, 578 residues long: Dapdiamide synthesis protein DdaD (578 aa).

The region spanning 498–573 (ESISATEHQI…KMAAWLDASS (76 aa)) is the Carrier domain. Residue serine 533 is modified to O-(pantetheine 4'-phosphoryl)serine.

Belongs to the ATP-dependent AMP-binding enzyme family. It depends on pantetheine 4'-phosphate as a cofactor.

Its pathway is antibiotic biosynthesis. Involved in dapdiamide antibiotics biosynthesis. Activates and sequesters N-beta-fumaramoyl-DAP as a covalently tethered thioester for subsequent oxidative modification of the fumaramoyl group. This chain is Dapdiamide synthesis protein DdaD, found in Enterobacter agglomerans (Erwinia herbicola).